Here is a 348-residue protein sequence, read N- to C-terminus: Lipooligosaccharide heptosyltransferase 2 (348 aa).

The protein belongs to the glycosyltransferase 9 family.

The catalysed reaction is an L-alpha-D-Hep-(1-&gt;5)-[alpha-Kdo-(2-&gt;4)]-alpha-Kdo-(2-&gt;6)-lipid A + ADP-L-glycero-beta-D-manno-heptose = an L-alpha-D-Hep-(1-&gt;3)-L-alpha-D-Hep-(1-&gt;5)-[alpha-Kdo-(2-&gt;4)]-alpha-Kdo-(2-&gt;6)-lipid A + ADP + H(+). It participates in bacterial outer membrane biogenesis; LOS core biosynthesis. Functionally, glycosyltransferase involved in the biosynthesis of the core oligosaccharide region of lipooligosaccharide (LOS). Catalyzes the addition of a heptose unit to the heptosyl-Kdo2-lipid A module. In Haemophilus ducreyi (strain 35000HP / ATCC 700724), this protein is Lipooligosaccharide heptosyltransferase 2.